The following is a 231-amino-acid chain: E3 ubiquitin-protein ligase At3g02290 (231 aa).

Basic and acidic residues predominate over residues 103-118 (GSSHSHEEVEPLRSDS). The interval 103 to 125 (GSSHSHEEVEPLRSDSDADSESF) is disordered. The RING-type; atypical zinc finger occupies 181–222 (CPTCLEEYTSENPKIVTKCSHHFHLSCIYEWMERSENCPVCG).

It localises to the cytoplasm. The catalysed reaction is S-ubiquitinyl-[E2 ubiquitin-conjugating enzyme]-L-cysteine + [acceptor protein]-L-lysine = [E2 ubiquitin-conjugating enzyme]-L-cysteine + N(6)-ubiquitinyl-[acceptor protein]-L-lysine.. Its pathway is protein modification; protein ubiquitination. Functionally, mediates E2-dependent protein ubiquitination. This Arabidopsis thaliana (Mouse-ear cress) protein is E3 ubiquitin-protein ligase At3g02290.